Reading from the N-terminus, the 156-residue chain is LIM domain only protein 3 (156 aa).

LIM zinc-binding domains follow at residues 22-84 (KGCA…LFGV) and 86-148 (GNCA…GLMK).

This Xenopus laevis (African clawed frog) protein is LIM domain only protein 3.